The following is a 170-amino-acid chain: Transmembrane protein 252 (170 aa).

Transmembrane regions (helical) follow at residues 8–28 (ILCALALLMGFLMVCLGAFFI) and 40–60 (LIAAYLLLPLGFVILLSGIFW). Residues 112 to 147 (CPAEREASGIPPPLYTETGLEFQDGNDSHPEAPPSY) are disordered.

Its subcellular location is the membrane. This Pongo abelii (Sumatran orangutan) protein is Transmembrane protein 252 (TMEM252).